A 259-amino-acid chain; its full sequence is Bacillaene synthase dehydratase PksH (259 aa).

Residues aspartate 68 and glutamate 137 contribute to the active site.

Belongs to the enoyl-CoA hydratase/isomerase family.

It localises to the cytoplasm. It functions in the pathway antibiotic biosynthesis; bacillaene biosynthesis. In terms of biological role, involved in some intermediate steps for the synthesis of the antibiotic polyketide bacillaene which is involved in secondary metabolism. Catalyzes the dehydration of the (S)-3-hydroxy-3-methylglutaryl group tethered to PksL to a 3-methylglutaconyl moiety. The protein is Bacillaene synthase dehydratase PksH (pksH) of Bacillus subtilis (strain 168).